We begin with the raw amino-acid sequence, 342 residues long: Thioredoxin reductase 2, mitochondrial (342 aa).

A mitochondrion-targeting transit peptide spans 1–23 (MIKHIVSPFRTNFVGISKSVLSR). FAD is bound by residues 34 to 37 (SGPA), 56 to 68 (EGMM…AGGQ), 63 to 64 (IA), Gln-68, Asn-77, Val-110, Cys-168, Asp-311, 311 to 320 (DVQDSRYRQA), and 318 to 320 (RQA). An intrachain disulfide couples Cys-165 to Cys-168.

It belongs to the class-II pyridine nucleotide-disulfide oxidoreductase family. As to quaternary structure, homodimer. The cofactor is FAD.

It is found in the mitochondrion. It catalyses the reaction [thioredoxin]-dithiol + NADP(+) = [thioredoxin]-disulfide + NADPH + H(+). Acts on mitochondrial thioredoxin 3. Implicated in the defense against oxidative stress. This is Thioredoxin reductase 2, mitochondrial from Saccharomyces cerevisiae (strain ATCC 204508 / S288c) (Baker's yeast).